The primary structure comprises 34 residues: uncharacterized protein (34 aa).

This is an uncharacterized protein from Treponema pallidum (strain Nichols).